Reading from the N-terminus, the 449-residue chain is Tubulin beta chain (449 aa).

The GTP site is built by Gln11, Glu69, Ser138, Gly142, Thr143, Gly144, Asn204, and Asn226. Glu69 serves as a coordination point for Mg(2+). The disordered stretch occupies residues 426 to 449; the sequence is QDATAEEEGEFDEEEGEMGAEEGA. Positions 429-449 are enriched in acidic residues; the sequence is TAEEEGEFDEEEGEMGAEEGA.

It belongs to the tubulin family. As to quaternary structure, dimer of alpha and beta chains. A typical microtubule is a hollow water-filled tube with an outer diameter of 25 nm and an inner diameter of 15 nM. Alpha-beta heterodimers associate head-to-tail to form protofilaments running lengthwise along the microtubule wall with the beta-tubulin subunit facing the microtubule plus end conferring a structural polarity. Microtubules usually have 13 protofilaments but different protofilament numbers can be found in some organisms and specialized cells. The cofactor is Mg(2+).

The protein localises to the cytoplasm. The protein resides in the cytoskeleton. Its function is as follows. Tubulin is the major constituent of microtubules, a cylinder consisting of laterally associated linear protofilaments composed of alpha- and beta-tubulin heterodimers. Microtubules grow by the addition of GTP-tubulin dimers to the microtubule end, where a stabilizing cap forms. Below the cap, tubulin dimers are in GDP-bound state, owing to GTPase activity of alpha-tubulin. The chain is Tubulin beta chain from Toxoplasma gondii.